Consider the following 40-residue polypeptide: Cytolysin SmT-1 (40 aa).

Positions Ala3–Ala12 are plays an important role in the hemolytic activity. The segment at Gly11–Ser30 is N-terminal region.

Belongs to the actinoporin family. Sea anemone subfamily. Octamer or nonamer in membranes. Monomer in the soluble state.

The protein localises to the secreted. It is found in the nematocyst. The protein resides in the target cell membrane. Its function is as follows. Pore-forming protein that forms cations-selective hydrophilic pores of around 1 nm and causes cardiac stimulation and cytolysis. Pore formation is a multi-step process that involves specific recognition of membrane sphingomyelin (but neither cholesterol nor phosphatidylcholine) using aromatic rich region and adjacent phosphocholine (POC) binding site, firm binding to the membrane (mainly driven by hydrophobic interactions) accompanied by the transfer of the N-terminal region to the lipid-water interface and finally pore formation after oligomerization of monomers. This toxin shows hemolytic activities. This is Cytolysin SmT-1 from Stichodactyla mertensii (Merten's carpet sea anemone).